The primary structure comprises 113 residues: UPF0342 protein SPy_0811/M5005_Spy0626 (113 aa).

This sequence belongs to the UPF0342 family.

This chain is UPF0342 protein SPy_0811/M5005_Spy0626, found in Streptococcus pyogenes serotype M1.